The chain runs to 331 residues: Phosphate acyltransferase (331 aa).

It belongs to the PlsX family. As to quaternary structure, homodimer. Probably interacts with PlsY.

Its subcellular location is the cytoplasm. The catalysed reaction is a fatty acyl-[ACP] + phosphate = an acyl phosphate + holo-[ACP]. The protein operates within lipid metabolism; phospholipid metabolism. In terms of biological role, catalyzes the reversible formation of acyl-phosphate (acyl-PO(4)) from acyl-[acyl-carrier-protein] (acyl-ACP). This enzyme utilizes acyl-ACP as fatty acyl donor, but not acyl-CoA. This is Phosphate acyltransferase from Clostridium acetobutylicum (strain ATCC 824 / DSM 792 / JCM 1419 / IAM 19013 / LMG 5710 / NBRC 13948 / NRRL B-527 / VKM B-1787 / 2291 / W).